Here is a 255-residue protein sequence, read N- to C-terminus: Coiled-coil domain-containing 92B (255 aa).

The stretch at 28 to 90 (LRDLHLEILR…AAANAELRRE (63 aa)) forms a coiled coil. The interval 149 to 255 (QRLQAPRPGP…SQPSAPGDPE (107 aa)) is disordered. The span at 166–177 (PRRRALRARRPP) shows a compositional bias: basic residues. Positions 242 to 255 (QPAPSQPSAPGDPE) are enriched in pro residues.

This chain is Coiled-coil domain-containing 92B, found in Homo sapiens (Human).